We begin with the raw amino-acid sequence, 321 residues long: Ribosomal RNA small subunit methyltransferase H (321 aa).

S-adenosyl-L-methionine is bound by residues 43-45 (GGH), Asp-63, Phe-89, Asp-110, and Gln-117. Residues 286-321 (HPAGKALRAGPRETRDNPRSRSAVLRVAERSERHAA) are disordered. Basic and acidic residues-rich tracts occupy residues 295-304 (GPRETRDNPR) and 312-321 (VAERSERHAA).

This sequence belongs to the methyltransferase superfamily. RsmH family.

The protein localises to the cytoplasm. The catalysed reaction is cytidine(1402) in 16S rRNA + S-adenosyl-L-methionine = N(4)-methylcytidine(1402) in 16S rRNA + S-adenosyl-L-homocysteine + H(+). Its function is as follows. Specifically methylates the N4 position of cytidine in position 1402 (C1402) of 16S rRNA. The sequence is that of Ribosomal RNA small subunit methyltransferase H from Acidithiobacillus ferrooxidans (strain ATCC 23270 / DSM 14882 / CIP 104768 / NCIMB 8455) (Ferrobacillus ferrooxidans (strain ATCC 23270)).